The sequence spans 198 residues: Small ribosomal subunit protein uS4 (198 aa).

Positions 90 to 152 constitute an S4 RNA-binding domain; the sequence is TRLDNLVLRA…SRSNELFKEN (63 aa).

It belongs to the universal ribosomal protein uS4 family. In terms of assembly, part of the 30S ribosomal subunit. Contacts protein S5. The interaction surface between S4 and S5 is involved in control of translational fidelity.

Its function is as follows. One of the primary rRNA binding proteins, it binds directly to 16S rRNA where it nucleates assembly of the body of the 30S subunit. Functionally, with S5 and S12 plays an important role in translational accuracy. This Finegoldia magna (strain ATCC 29328 / DSM 20472 / WAL 2508) (Peptostreptococcus magnus) protein is Small ribosomal subunit protein uS4.